Here is a 436-residue protein sequence, read N- to C-terminus: 3-ketoacyl-CoA thiolase (436 aa).

C99 functions as the Acyl-thioester intermediate in the catalytic mechanism. Active-site proton acceptor residues include H392 and C422.

It belongs to the thiolase-like superfamily. Thiolase family. Heterotetramer of two alpha chains (FadJ) and two beta chains (FadI).

Its subcellular location is the cytoplasm. The catalysed reaction is an acyl-CoA + acetyl-CoA = a 3-oxoacyl-CoA + CoA. Its pathway is lipid metabolism; fatty acid beta-oxidation. Functionally, catalyzes the final step of fatty acid oxidation in which acetyl-CoA is released and the CoA ester of a fatty acid two carbons shorter is formed. The sequence is that of 3-ketoacyl-CoA thiolase from Escherichia fergusonii (strain ATCC 35469 / DSM 13698 / CCUG 18766 / IAM 14443 / JCM 21226 / LMG 7866 / NBRC 102419 / NCTC 12128 / CDC 0568-73).